We begin with the raw amino-acid sequence, 156 residues long: ATP synthase subunit b (156 aa).

The chain crosses the membrane as a helical span at residues 7–27; it reads LIGQLIAFAIFVAFCMKFVWP.

Belongs to the ATPase B chain family. F-type ATPases have 2 components, F(1) - the catalytic core - and F(0) - the membrane proton channel. F(1) has five subunits: alpha(3), beta(3), gamma(1), delta(1), epsilon(1). F(0) has three main subunits: a(1), b(2) and c(10-14). The alpha and beta chains form an alternating ring which encloses part of the gamma chain. F(1) is attached to F(0) by a central stalk formed by the gamma and epsilon chains, while a peripheral stalk is formed by the delta and b chains.

It localises to the cell inner membrane. F(1)F(0) ATP synthase produces ATP from ADP in the presence of a proton or sodium gradient. F-type ATPases consist of two structural domains, F(1) containing the extramembraneous catalytic core and F(0) containing the membrane proton channel, linked together by a central stalk and a peripheral stalk. During catalysis, ATP synthesis in the catalytic domain of F(1) is coupled via a rotary mechanism of the central stalk subunits to proton translocation. In terms of biological role, component of the F(0) channel, it forms part of the peripheral stalk, linking F(1) to F(0). The polypeptide is ATP synthase subunit b (Pasteurella multocida (strain Pm70)).